Reading from the N-terminus, the 354-residue chain is Uroporphyrinogen decarboxylase (354 aa).

Residues 27 to 31 (RQAGR), aspartate 77, tyrosine 154, serine 209, and histidine 327 each bind substrate.

The protein belongs to the uroporphyrinogen decarboxylase family. Homodimer.

The protein localises to the cytoplasm. The catalysed reaction is uroporphyrinogen III + 4 H(+) = coproporphyrinogen III + 4 CO2. Its pathway is porphyrin-containing compound metabolism; protoporphyrin-IX biosynthesis; coproporphyrinogen-III from 5-aminolevulinate: step 4/4. Catalyzes the decarboxylation of four acetate groups of uroporphyrinogen-III to yield coproporphyrinogen-III. This Shewanella pealeana (strain ATCC 700345 / ANG-SQ1) protein is Uroporphyrinogen decarboxylase.